A 65-amino-acid chain; its full sequence is VESP-VB2 (65 aa).

The N-terminal stretch at 1–23 (MKMSILFLFALIASLACLQLTFA) is a signal peptide. AXPX repeat units follow at residues 23-26 (AAPA), 27-30 (ASPF), 31-34 (ANPG), 35-38 (ASPE), 39-42 (AAPL), 43-46 (ADPL), and 47-50 (ADPF). The propeptide occupies 24-49 (APAASPFANPGASPEAAPLADPLADP). Leu62 carries the leucine amide modification.

It belongs to the MCD family. Mastoparan subfamily. As to expression, expressed by the venom gland.

Its subcellular location is the secreted. Its function is as follows. Antimicrobial peptide. Shows activity against both Gram-positive and -negative bacteria, as well against fungi. Also promotes important mast cell degranulation. Shows little hemolytic activity on rabbit and human erythrocytes. Its mast cell degranulation activity may be related to the activation of G-protein coupled receptors in mast cells as well as interaction with other proteins located in cell endosomal membranes in the mast cells. The sequence is that of VESP-VB2 from Vespa bicolor (Black shield wasp).